The sequence spans 700 residues: Pyrroloquinoline quinone transporter (700 aa).

Residues 1 to 23 (MKIFSVRQTVLPALLVLSPVVFA) form the signal peptide. Residues 39-157 (SELDTPAAVS…SGGVMNVTTQ (119 aa)) form the TBDR plug domain. Beta stranded transmembrane passes span 132 to 136 (NVEVL), 150 to 160 (GVMNVTTQTGQ), 162 to 171 (PPTIEASSYY), 177 to 186 (WRYGLKATGA), 195 to 204 (DVDYTVSTTR), 220 to 227 (LANAKLGV), 233 to 241 (SKLSLIFNS), 280 to 288 (QAGLRYERS), 295 to 301 (MSVMMYA), 335 to 344 (GIDSRWTHRG), 350 to 358 (VTFTTGLNY), 398 to 405 (DPYLQTQW), 411 to 419 (LSLDAGVRY), 447 to 456 (WLPAGSLKYA), 464 to 468 (YLAAG), 500 to 509 (TIEIGSKTRI), 511 to 520 (DGLLSLALFQ), 549 to 556 (GAELAWDQ), 563 to 570 (RVNASWTW), 597 to 604 (MGFASIGY), 611 to 617 (YAGTEAR), 637 to 647 (LVGLFTGYKYN), 651 to 659 (LTVDLFGRV), and 689 to 697 (YGVGMNIAW). The region spanning 162-697 (PPTIEASSYY…NYGVGMNIAW (536 aa)) is the TBDR beta-barrel domain. The TonB C-terminal box signature appears at 680-700 (YYEPSPGRNYGVGMNIAWRFE).

Belongs to the TonB-dependent receptor family.

The protein localises to the cell outer membrane. Mediates the TonB-dependent high affinity transport across the outer membrane of pyrroloquinoline quinone (PQQ), a redox cofactor required for the activity of Gcd and Asd dehydrogenases. The uptake process is energised via the TonB-ExbBD complex. Not involved in the transport of an iron-containing substrate under laboratory conditions. The chain is Pyrroloquinoline quinone transporter from Escherichia coli (strain K12).